A 1095-amino-acid chain; its full sequence is DNA-directed RNA polymerase subunit beta'' (1095 aa).

The Zn(2+) site is built by Cys-220, Cys-293, Cys-300, and Cys-303.

It belongs to the RNA polymerase beta' chain family. RpoC2 subfamily. As to quaternary structure, in plastids the minimal PEP RNA polymerase catalytic core is composed of four subunits: alpha, beta, beta', and beta''. When a (nuclear-encoded) sigma factor is associated with the core the holoenzyme is formed, which can initiate transcription. Zn(2+) is required as a cofactor.

The protein localises to the plastid. It localises to the chloroplast. It carries out the reaction RNA(n) + a ribonucleoside 5'-triphosphate = RNA(n+1) + diphosphate. DNA-dependent RNA polymerase catalyzes the transcription of DNA into RNA using the four ribonucleoside triphosphates as substrates. The sequence is that of DNA-directed RNA polymerase subunit beta'' from Zygnema circumcarinatum (Green alga).